The primary structure comprises 287 residues: Deoxyuridine 5'-triphosphate nucleotidohydrolase (287 aa).

Residue 173 to 175 coordinates substrate; that stretch reads RSG. Positions 264-275 are enriched in low complexity; that stretch reads SSSKDTSDSQMS. The interval 264 to 287 is disordered; sequence SSSKDTSDSQMSRGDAGLGSSGLM.

It belongs to the dUTPase family. Mg(2+) is required as a cofactor.

The enzyme catalyses dUTP + H2O = dUMP + diphosphate + H(+). In terms of biological role, involved in nucleotide metabolism: produces dUMP, the immediate precursor of thymidine nucleotides and decreases the intracellular concentration of dUTP to avoid uracil incorporation into viral DNA. The sequence is that of Deoxyuridine 5'-triphosphate nucleotidohydrolase from Saimiriine herpesvirus 2 (strain 11) (SaHV-2).